The chain runs to 241 residues: Uridylate kinase (241 aa).

Position 12–15 (12–15 (KISG)) interacts with ATP. Residues 20–25 (GEKGTG) are involved in allosteric activation by GTP. G54 serves as a coordination point for UMP. ATP-binding residues include G55 and R59. UMP contacts are provided by residues D74 and 135–142 (TGNPYFST). ATP-binding residues include N163, Y169, and D172.

It belongs to the UMP kinase family. In terms of assembly, homohexamer.

It is found in the cytoplasm. It catalyses the reaction UMP + ATP = UDP + ADP. Its pathway is pyrimidine metabolism; CTP biosynthesis via de novo pathway; UDP from UMP (UMPK route): step 1/1. With respect to regulation, allosterically activated by GTP. Inhibited by UTP. Catalyzes the reversible phosphorylation of UMP to UDP. The protein is Uridylate kinase of Lactobacillus delbrueckii subsp. bulgaricus (strain ATCC 11842 / DSM 20081 / BCRC 10696 / JCM 1002 / NBRC 13953 / NCIMB 11778 / NCTC 12712 / WDCM 00102 / Lb 14).